The sequence spans 448 residues: Porin AaxA (448 aa).

The N-terminal stretch at 1 to 24 (MASFRSSLLSALCAYGMMVMPAYA) is a signal peptide.

The protein belongs to the OprB family.

It is found in the cell outer membrane. In terms of biological role, facilitates L-arginine uptake, as part of the AaxABC system. The arginine uptake by the bacterium in the macrophage may be a virulence factor against the host innate immune response. This Chlamydia abortus (strain DSM 27085 / S26/3) (Chlamydophila abortus) protein is Porin AaxA (aaxA).